A 158-amino-acid polypeptide reads, in one-letter code: Transcriptional repressor NrdR (158 aa).

The segment at 3–34 (CPFCGSLDTQVIDSRANEAGDAIRRRRRCAAC) is a zinc-finger region. Residues 49-139 (PQIVKTNGTR…VYKSFKDPDD (91 aa)) enclose the ATP-cone domain.

Belongs to the NrdR family. It depends on Zn(2+) as a cofactor.

In terms of biological role, negatively regulates transcription of bacterial ribonucleotide reductase nrd genes and operons by binding to NrdR-boxes. This chain is Transcriptional repressor NrdR, found in Thiobacillus denitrificans (strain ATCC 25259 / T1).